The primary structure comprises 112 residues: Signal peptidase complex-like protein DTM1 (112 aa).

An N-terminal signal peptide occupies residues 1–25 (MGRDEMLRRSLVALAAAVVVTGVVT). Transmembrane regions (helical) follow at residues 33–53 (ATYGFGILAIAGVLLPDWEFF) and 92–112 (MAMLTTIYGFGLYKWWMYVSS).

The protein belongs to the SPCS1 family.

The protein localises to the endoplasmic reticulum membrane. Its function is as follows. Functions in tapetum development during early meiosis. May play a role in the endoplasmic reticulum (ER) membrane in the early stages of tapetum development in anthers. Seems to function after MSP1 and before UDT1. The chain is Signal peptidase complex-like protein DTM1 from Oryza sativa subsp. japonica (Rice).